The chain runs to 320 residues: Lipoyl synthase (320 aa).

7 residues coordinate [4Fe-4S] cluster: C67, C72, C78, C93, C97, C100, and S307. The 218-residue stretch at 79–296 folds into the Radical SAM core domain; that stretch reads FNHGTATFMI…RDKANEMGFE (218 aa).

It belongs to the radical SAM superfamily. Lipoyl synthase family. The cofactor is [4Fe-4S] cluster.

It is found in the cytoplasm. The enzyme catalyses [[Fe-S] cluster scaffold protein carrying a second [4Fe-4S](2+) cluster] + N(6)-octanoyl-L-lysyl-[protein] + 2 oxidized [2Fe-2S]-[ferredoxin] + 2 S-adenosyl-L-methionine + 4 H(+) = [[Fe-S] cluster scaffold protein] + N(6)-[(R)-dihydrolipoyl]-L-lysyl-[protein] + 4 Fe(3+) + 2 hydrogen sulfide + 2 5'-deoxyadenosine + 2 L-methionine + 2 reduced [2Fe-2S]-[ferredoxin]. The protein operates within protein modification; protein lipoylation via endogenous pathway; protein N(6)-(lipoyl)lysine from octanoyl-[acyl-carrier-protein]: step 2/2. Its function is as follows. Catalyzes the radical-mediated insertion of two sulfur atoms into the C-6 and C-8 positions of the octanoyl moiety bound to the lipoyl domains of lipoate-dependent enzymes, thereby converting the octanoylated domains into lipoylated derivatives. This is Lipoyl synthase from Haemophilus influenzae (strain PittGG).